A 304-amino-acid chain; its full sequence is Small ribosomal subunit biogenesis GTPase RsgA (304 aa).

The CP-type G domain occupies 78–237 (HSFLTRPPVA…VADTPGFNRP (160 aa)). Residues 127-130 (TKTD) and 179-187 (GPSGVGKSS) each bind GTP. Residues Cys262, Cys267, His269, and Cys275 each coordinate Zn(2+).

It belongs to the TRAFAC class YlqF/YawG GTPase family. RsgA subfamily. Monomer. Associates with 30S ribosomal subunit, binds 16S rRNA. Requires Zn(2+) as cofactor.

The protein resides in the cytoplasm. One of several proteins that assist in the late maturation steps of the functional core of the 30S ribosomal subunit. Helps release RbfA from mature subunits. May play a role in the assembly of ribosomal proteins into the subunit. Circularly permuted GTPase that catalyzes slow GTP hydrolysis, GTPase activity is stimulated by the 30S ribosomal subunit. This Synechococcus sp. (strain CC9605) protein is Small ribosomal subunit biogenesis GTPase RsgA.